Consider the following 669-residue polypeptide: Major S-layer protein (669 aa).

Residues 1 to 24 form the signal peptide; that stretch reads MKRFAAVSLAALMLLTVFASAASA. 5 N-linked (GlcNAc...) asparagine glycosylation sites follow: Asn-36, Asn-70, Asn-116, Asn-600, and Asn-607. The disordered stretch occupies residues 588–648; the sequence is DGEVVDDDED…PTEADGTTPG (61 aa). Over residues 590–627 the composition is skewed to acidic residues; sequence EVVDDDEDDDNVTEPVDNDTEVEEPTEEPTEGPTEEPT. The helical transmembrane segment at 645–665 threads the bilayer; it reads TTPGFGVVLGLVGLLAVVYLV.

The protein belongs to the Methanosarcinales S-layer protein family. Post-translationally, glycosylated.

It is found in the secreted. It localises to the cell wall. Its subcellular location is the S-layer. The protein resides in the cell membrane. Its function is as follows. S-layer protein. The S-layer is a paracrystalline mono-layered assembly of proteins which coat the surface of the cell. This is Major S-layer protein from Methanosarcina mazei (strain ATCC BAA-159 / DSM 3647 / Goe1 / Go1 / JCM 11833 / OCM 88) (Methanosarcina frisia).